The chain runs to 583 residues: Aspartate--tRNA(Asp/Asn) ligase (583 aa).

Glutamate 172 contacts L-aspartate. The interval 196-199 is aspartate; the sequence is QMLK. An L-aspartate-binding site is contributed by arginine 218. ATP contacts are provided by residues 218 to 220 and glutamine 227; that span reads RDE. An L-aspartate-binding site is contributed by histidine 446. Glutamate 480 is a binding site for ATP. Arginine 487 contributes to the L-aspartate binding site. Residue 532–535 coordinates ATP; sequence GLDR.

This sequence belongs to the class-II aminoacyl-tRNA synthetase family. Type 1 subfamily. As to quaternary structure, homodimer.

The protein resides in the cytoplasm. It catalyses the reaction tRNA(Asx) + L-aspartate + ATP = L-aspartyl-tRNA(Asx) + AMP + diphosphate. Aspartyl-tRNA synthetase with relaxed tRNA specificity since it is able to aspartylate not only its cognate tRNA(Asp) but also tRNA(Asn). Reaction proceeds in two steps: L-aspartate is first activated by ATP to form Asp-AMP and then transferred to the acceptor end of tRNA(Asp/Asn). The protein is Aspartate--tRNA(Asp/Asn) ligase of Streptococcus mutans serotype c (strain ATCC 700610 / UA159).